The primary structure comprises 452 residues: Pup--protein ligase (452 aa).

A Mg(2+)-binding site is contributed by glutamate 9. ATP is bound at residue arginine 53. Tyrosine 55 serves as a coordination point for Mg(2+). Residue aspartate 57 is the Proton acceptor of the active site. Residue glutamate 63 coordinates Mg(2+). 2 residues coordinate ATP: threonine 66 and tryptophan 419.

Belongs to the Pup ligase/Pup deamidase family. Pup-conjugating enzyme subfamily.

The catalysed reaction is ATP + [prokaryotic ubiquitin-like protein]-L-glutamate + [protein]-L-lysine = ADP + phosphate + N(6)-([prokaryotic ubiquitin-like protein]-gamma-L-glutamyl)-[protein]-L-lysine.. Its pathway is protein degradation; proteasomal Pup-dependent pathway. The protein operates within protein modification; protein pupylation. Its function is as follows. Catalyzes the covalent attachment of the prokaryotic ubiquitin-like protein modifier Pup to the proteasomal substrate proteins, thereby targeting them for proteasomal degradation. This tagging system is termed pupylation. The ligation reaction involves the side-chain carboxylate of the C-terminal glutamate of Pup and the side-chain amino group of a substrate lysine. The polypeptide is Pup--protein ligase (Geodermatophilus obscurus (strain ATCC 25078 / DSM 43160 / JCM 3152 / CCUG 61914 / KCC A-0152 / KCTC 9177 / NBRC 13315 / NRRL B-3577 / G-20)).